The sequence spans 397 residues: Acetate kinase (397 aa).

N8 is a binding site for Mg(2+). K15 contacts ATP. R90 is a substrate binding site. D147 (proton donor/acceptor) is an active-site residue. ATP-binding positions include 207 to 211 (HLGAG), 283 to 285 (DMR), and 330 to 334 (GVGEN). Mg(2+) is bound at residue E383.

It belongs to the acetokinase family. As to quaternary structure, homodimer. It depends on Mg(2+) as a cofactor. Mn(2+) is required as a cofactor.

The protein localises to the cytoplasm. The catalysed reaction is acetate + ATP = acetyl phosphate + ADP. It functions in the pathway metabolic intermediate biosynthesis; acetyl-CoA biosynthesis; acetyl-CoA from acetate: step 1/2. In terms of biological role, catalyzes the formation of acetyl phosphate from acetate and ATP. Can also catalyze the reverse reaction. This is Acetate kinase from Fructilactobacillus sanfranciscensis (Lactobacillus sanfranciscensis).